The sequence spans 380 residues: Transmembrane protein 229A (380 aa).

Residues 1–40 (MAGSDVDSEGPARRGGAARRPGAPGGPGSEAAAGCPEPLS) are disordered. Helical transmembrane passes span 51–71 (LPAW…DVLV) and 117–137 (AFVF…TLAG). Positions 188–236 (RQQQQQQQQQQQQRRGALPVPPGARVPTAAGARRRRPRGPRGAGGAPSQ) are disordered. The span at 190–202 (QQQQQQQQQQQRR) shows a compositional bias: low complexity. 4 helical membrane-spanning segments follow: residues 244–264 (FLFF…FFNV), 278–298 (LWSF…YFHL), 310–330 (VPIY…GLRT), and 343–363 (LNFM…LSVY).

It belongs to the TMEM229 family.

The protein resides in the membrane. This Homo sapiens (Human) protein is Transmembrane protein 229A (TMEM229A).